The following is a 186-amino-acid chain: MDKKLKSKSKFLSLVLRHQPELIQLPLDANGWADIEVLLAGAARQGVNISLQDVLEIVATNDKQRFALSGDKRRIRASQGHSIDVDLQLTPVTPPDELYHGSATRFTDAILATGLQPGQRRHVHLSADVETAHKVGSRHGKPVIFRIDAKALTLAGHAFYLSANQVWLTDAVPPQYLSLLDTSPQG.

This sequence belongs to the KptA/TPT1 family.

Its function is as follows. Removes the 2'-phosphate from RNA via an intermediate in which the phosphate is ADP-ribosylated by NAD followed by a presumed transesterification to release the RNA and generate ADP-ribose 1''-2''-cyclic phosphate (APPR&gt;P). May function as an ADP-ribosylase. This Hahella chejuensis (strain KCTC 2396) protein is Probable RNA 2'-phosphotransferase.